The chain runs to 374 residues: Ribonuclease D (374 aa).

The 3'-5' exonuclease domain maps to 3-171; sequence YQLITTDDGL…MAIRLVEETT (169 aa). Residues 210–289 enclose the HRDC domain; sequence KGRHLACLQK…AETQTMDAAE (80 aa).

It belongs to the RNase D family. The cofactor is a divalent metal cation.

Its subcellular location is the cytoplasm. The catalysed reaction is Exonucleolytic cleavage that removes extra residues from the 3'-terminus of tRNA to produce 5'-mononucleotides.. Its function is as follows. Exonuclease involved in the 3' processing of various precursor tRNAs. Initiates hydrolysis at the 3'-terminus of an RNA molecule and releases 5'-mononucleotides. This chain is Ribonuclease D, found in Musicola paradisiaca (strain Ech703) (Dickeya paradisiaca).